The primary structure comprises 411 residues: UPF0597 protein Fnod_1278 (411 aa).

This sequence belongs to the UPF0597 family.

In Fervidobacterium nodosum (strain ATCC 35602 / DSM 5306 / Rt17-B1), this protein is UPF0597 protein Fnod_1278.